Reading from the N-terminus, the 91-residue chain is DNA-directed RNA polymerase subunit omega (91 aa).

It belongs to the RNA polymerase subunit omega family. The RNAP catalytic core consists of 2 alpha, 1 beta, 1 beta' and 1 omega subunit. When a sigma factor is associated with the core the holoenzyme is formed, which can initiate transcription.

It carries out the reaction RNA(n) + a ribonucleoside 5'-triphosphate = RNA(n+1) + diphosphate. In terms of biological role, promotes RNA polymerase assembly. Latches the N- and C-terminal regions of the beta' subunit thereby facilitating its interaction with the beta and alpha subunits. This chain is DNA-directed RNA polymerase subunit omega, found in Actinobacillus pleuropneumoniae serotype 5b (strain L20).